The sequence spans 309 residues: ATP synthase gamma chain (309 aa).

The protein belongs to the ATPase gamma chain family. In terms of assembly, F-type ATPases have 2 components, CF(1) - the catalytic core - and CF(0) - the membrane proton channel. CF(1) has five subunits: alpha(3), beta(3), gamma(1), delta(1), epsilon(1). CF(0) has three main subunits: a, b and c.

It is found in the cell membrane. Its function is as follows. Produces ATP from ADP in the presence of a proton gradient across the membrane. The gamma chain is believed to be important in regulating ATPase activity and the flow of protons through the CF(0) complex. In Salinispora arenicola (strain CNS-205), this protein is ATP synthase gamma chain.